We begin with the raw amino-acid sequence, 651 residues long: LysM domain receptor-like kinase 3 (651 aa).

Residues M1–S19 form the signal peptide. N-linked (GlcNAc...) asparagine glycans are attached at residues N2, N23, N42, N73, N86, N100, N114, and N177. Over K20–Y236 the chain is Extracellular. Intrachain disulfides connect C24-C76, C31-C133, and C74-C131. Positions M142 to I186 constitute a LysM domain. Residues Y196 to N216 form a disordered region. N-linked (GlcNAc...) asparagine glycosylation is found at N218 and N225. Residues I237 to C257 traverse the membrane as a helical segment. Over I258 to R651 the chain is Cytoplasmic. The residue at position 330 (T330) is a Phosphothreonine. The region spanning F341–L628 is the Protein kinase domain. ATP contacts are provided by residues L347–V355 and K368. A Phosphotyrosine modification is found at Y410. D464 serves as the catalytic Proton acceptor. S468 bears the Phosphoserine mark. Phosphothreonine occurs at positions 500 and 505. Position 513 is a phosphotyrosine (Y513).

It belongs to the protein kinase superfamily. Ser/Thr protein kinase family.

It is found in the cell membrane. In terms of biological role, putative Lysin motif (LysM) receptor kinase that may recognize microbe-derived N-acetylglucosamine (NAG)-containing ligands. The chain is LysM domain receptor-like kinase 3 (LYK3) from Arabidopsis thaliana (Mouse-ear cress).